A 739-amino-acid chain; its full sequence is MICOS complex subunit Mic60 (739 aa).

The interval 23-63 is disordered; sequence ANNRQFGGSSSGSGGREQGRRQQEEQGQQGDQGYQGYQSLP. Low complexity predominate over residues 47–61; the sequence is EQGQQGDQGYQGYQS. A helical membrane pass occupies residues 69–89; that stretch reads AGFGKVVLFVSPLAAVGGVIT. Residues 154–219 are disordered; it reads VTGLFGGGSG…PAAKPKDNPL (66 aa). Basic and acidic residues predominate over residues 163-198; the sequence is GDDKSKKSKVEPVKATPAEEKRPSKPSEVSKTEAKP. The segment covering 199-212 has biased composition (low complexity); sequence VSKPAAAAAPAPAA. The stretch at 283 to 339 forms a coiled coil; the sequence is TAVATAERAAREAQEKIVACEIALSAAATAQNAKKVEAVRDKIKKLVDHIGNVKDEL.

The protein belongs to the MICOS complex subunit Mic60 family. As to quaternary structure, component of the mitochondrial contact site and cristae organizing system (MICOS) complex. Interacts with the mitochondria-shaping protein Opa1.

The protein resides in the mitochondrion inner membrane. Its function is as follows. Component of the MICOS complex, a large protein complex of the mitochondrial inner membrane that plays crucial roles in the maintenance of crista junctions, inner membrane architecture, and formation of contact sites to the outer membrane. This chain is MICOS complex subunit Mic60, found in Drosophila melanogaster (Fruit fly).